The following is a 176-amino-acid chain: Protein FimF (176 aa).

A signal peptide spans 1 to 20 (MRNKPFYLLCAFLWLAVSHA). Cysteine 38 and cysteine 78 are joined by a disulfide.

It belongs to the fimbrial protein family.

The protein localises to the fimbrium. In terms of biological role, involved in regulation of length and mediation of adhesion of type 1 fimbriae (but not necessary for the production of fimbriae). Involved in the integration of FimH in the fimbriae. The chain is Protein FimF (fimF) from Escherichia coli (strain K12).